The sequence spans 236 residues: Syntaxin-8 (236 aa).

Topologically, residues 1-215 are cytoplasmic; that stretch reads MAPDPWFSTY…LVDRKSASCG (215 aa). Residues 42–65 are a coiled coil; sequence LTIRTLLKNLKVKIDLLKDLLLRA. Phosphoserine occurs at positions 102 and 160. The t-SNARE coiled-coil homology domain maps to 145 to 207; the sequence is QKIIQEQDAG…RTEARRVTLV (63 aa). Residues 216–232 form a helical; Anchor for type IV membrane protein membrane-spanning segment; the sequence is MIMVILLLLVAIVVVAV. Residues 233-236 lie on the Vesicular side of the membrane; sequence WPTN.

This sequence belongs to the syntaxin family. Part of the SNARE core complex containing STX7, VAMP8 and VTI1B. Interacts with VAMP8. Forms a SNARE complex with STX7, VTI1B and VAMP8 which functions in the homotypic fusion of late endosomes. Component of the SNARE complex composed of STX7, STX8, VAMP7 and VTI1B that is required for heterotypic fusion of late endosomes with lysosomes. Interacts with HECTD3. Interacts with TPC1. Post-translationally, ubiquitinated by HECTD3. As to expression, widely expressed in all tissues examined.

The protein resides in the membrane. Its function is as follows. Vesicle trafficking protein that functions in the early secretory pathway, possibly by mediating retrograde transport from cis-Golgi membranes to the ER. The chain is Syntaxin-8 (Stx8) from Rattus norvegicus (Rat).